We begin with the raw amino-acid sequence, 376 residues long: MAKQDYYETLGVQKGADEKEIKRAYKRLAMKYHPDRTNGDKAAEEKFKEVNEAYEILMDKEKRAAYDQYGHAAFEQGGFGGGAGGFGGGFGGFGGFEDIFSEMFGGGASRQRVVRGEDLRYDIEITLEEAVRGTTKDIKINTLAACDHCDGSGAEKGSKVETCPTCHGHGRVRRQQGFFMTETTCPTCQGSGKKIEKPCKHCHGDGRVHKKKNLSVKIPAGVDTGNQLRLSGEGAAGENGAPAGDLYVVIHVKDHHIFERDGSNLYCEVPISFTMAALGGEIEVPTLDGRVKLKIPAETQTGKLFRMRGKGVTSTRAGYAGDLICKIIVETPVKLNEEQKELLRKFEESLEGQSKQRPKSSSFLDGVKKFFDNLGK.

The J domain occupies 5-70 (DYYETLGVQK…EKRAAYDQYG (66 aa)). Residues 133 to 211 (GTTKDIKINT…CHGDGRVHKK (79 aa)) form a CR-type zinc finger. Zn(2+)-binding residues include C146, C149, C163, C166, C185, C188, C199, and C202. 4 CXXCXGXG motif repeats span residues 146-153 (CDHCDGSG), 163-170 (CPTCHGHG), 185-192 (CPTCQGSG), and 199-206 (CKHCHGDG).

The protein belongs to the DnaJ family. In terms of assembly, homodimer. It depends on Zn(2+) as a cofactor.

It is found in the cytoplasm. In terms of biological role, participates actively in the response to hyperosmotic and heat shock by preventing the aggregation of stress-denatured proteins and by disaggregating proteins, also in an autonomous, DnaK-independent fashion. Unfolded proteins bind initially to DnaJ; upon interaction with the DnaJ-bound protein, DnaK hydrolyzes its bound ATP, resulting in the formation of a stable complex. GrpE releases ADP from DnaK; ATP binding to DnaK triggers the release of the substrate protein, thus completing the reaction cycle. Several rounds of ATP-dependent interactions between DnaJ, DnaK and GrpE are required for fully efficient folding. Also involved, together with DnaK and GrpE, in the DNA replication of plasmids through activation of initiation proteins. This is Chaperone protein DnaJ from Mannheimia succiniciproducens (strain KCTC 0769BP / MBEL55E).